A 262-amino-acid polypeptide reads, in one-letter code: DNA-directed RNA polymerase subunit Rpo3 (262 aa).

Belongs to the archaeal Rpo3/eukaryotic RPB3 RNA polymerase subunit family. Part of the RNA polymerase complex.

Its subcellular location is the cytoplasm. The catalysed reaction is RNA(n) + a ribonucleoside 5'-triphosphate = RNA(n+1) + diphosphate. DNA-dependent RNA polymerase (RNAP) catalyzes the transcription of DNA into RNA using the four ribonucleoside triphosphates as substrates. The chain is DNA-directed RNA polymerase subunit Rpo3 from Pyrobaculum neutrophilum (strain DSM 2338 / JCM 9278 / NBRC 100436 / V24Sta) (Thermoproteus neutrophilus).